We begin with the raw amino-acid sequence, 675 residues long: PTS system glucose-specific EIICBA component (675 aa).

A PTS EIIC type-1 domain is found at 3-414 (KKLFGQLQRI…FNFKTPGRED (412 aa)). Helical transmembrane passes span 16–36 (LMLP…GTAF), 59–79 (MMTG…ALGV), 81–101 (IGLA…FIIM), 126–146 (VLGI…GALA), 173–193 (IMMA…WPFI), 199–219 (AFST…FGFI), 273–293 (FMQG…LAIY), 303–323 (VVGG…ITEP), 328–348 (FLFV…LSFL), 355–375 (LHLG…GILP), and 378–398 (TPWW…YVVF). In terms of domain architecture, PTS EIIB type-1 spans 425-506 (SKLPFDVLDA…ARIMNGDITK (82 aa)). The active-site Phosphocysteine intermediate; for EIIB activity is cysteine 447. The PTS EIIA type-1 domain maps to 547–651 (DKVFSEKMMG…SVVTPVIITN (105 aa)). Catalysis depends on histidine 599, which acts as the Tele-phosphohistidine intermediate; for EIIA activity.

It localises to the cell membrane. The catalysed reaction is N(pros)-phospho-L-histidyl-[protein] + D-glucose(out) = D-glucose 6-phosphate(in) + L-histidyl-[protein]. The phosphoenolpyruvate-dependent sugar phosphotransferase system (sugar PTS), a major carbohydrate active transport system, catalyzes the phosphorylation of incoming sugar substrates concomitantly with their translocation across the cell membrane. This system is involved in glucose transport. This Staphylococcus haemolyticus (strain JCSC1435) protein is PTS system glucose-specific EIICBA component (ptsG).